Consider the following 154-residue polypeptide: Transcriptional repressor NrdR (154 aa).

Residues 3-34 (CPFCGANDTKVIDSRLVAEGEQVRRRRECLAC) fold into a zinc finger. Positions 49-139 (PRLIKQDGSR…VYRRFQDLNE (91 aa)) constitute an ATP-cone domain.

The protein belongs to the NrdR family. It depends on Zn(2+) as a cofactor.

Functionally, negatively regulates transcription of bacterial ribonucleotide reductase nrd genes and operons by binding to NrdR-boxes. The chain is Transcriptional repressor NrdR from Pseudomonas savastanoi pv. phaseolicola (strain 1448A / Race 6) (Pseudomonas syringae pv. phaseolicola (strain 1448A / Race 6)).